The sequence spans 332 residues: Probable farnesyl diphosphate synthase (332 aa).

K75, R78, and H107 together coordinate isopentenyl diphosphate. Residues D114 and D120 each coordinate Mg(2+). R125 serves as a coordination point for (2E)-geranyl diphosphate. R126 is an isopentenyl diphosphate binding site. K208, S209, Q250, and K267 together coordinate (2E)-geranyl diphosphate.

It belongs to the FPP/GGPP synthase family. The cofactor is Mg(2+).

The protein localises to the cytoplasm. It carries out the reaction isopentenyl diphosphate + (2E)-geranyl diphosphate = (2E,6E)-farnesyl diphosphate + diphosphate. The chain is Probable farnesyl diphosphate synthase (fppS) from Bradyrhizobium diazoefficiens (strain JCM 10833 / BCRC 13528 / IAM 13628 / NBRC 14792 / USDA 110).